A 268-amino-acid chain; its full sequence is uncharacterized protein (268 aa).

This sequence belongs to the LarE family.

This is an uncharacterized protein from Synechocystis sp. (strain ATCC 27184 / PCC 6803 / Kazusa).